Here is a 396-residue protein sequence, read N- to C-terminus: MAEKEHYERTKPHVNIGTIGHVDHGKTTLTAAITTVLAEDGLAQAEDYSQIDAAPEEKERGITINTAHVEYETKNRHYAHMDAPGHADYIKNMITGAAQMDGAILVVAATDGPMPQTREHILLARQVGVKYIVVFLNKVDLVDDPELIDLVEMEVRDLLTEYDYPGDDVPVIRGSALKALQGDPEQQDVIRKLMETVDEYIPTPERDTDKPFLMPVEDVFTITGRGTVASGRIDRGTVKVGDEVEIVGLTDKVEKSTVTGLEMFHKTLDLGEAGDNVGVLLRGIDRDQVERGQVLAAPGSIQTHKKFKGQVYILNKDEGGRHTPFFSDYRPQFYFHTTDVTGKIELPEGTEMVMPGDNVEFTVELIKPVAIEKGTKFTIREGGKTVGAGQVTEILD.

The tr-type G domain occupies 11 to 205 (KPHVNIGTIG…TVDEYIPTPE (195 aa)). The interval 20–27 (GHVDHGKT) is G1. 20–27 (GHVDHGKT) provides a ligand contact to GTP. Mg(2+) is bound at residue Thr-27. The tract at residues 61-65 (GITIN) is G2. The tract at residues 82-85 (DAPG) is G3. GTP contacts are provided by residues 82 to 86 (DAPGH) and 137 to 140 (NKVD). The segment at 137-140 (NKVD) is G4. Residues 175–177 (SAL) form a G5 region.

Belongs to the TRAFAC class translation factor GTPase superfamily. Classic translation factor GTPase family. EF-Tu/EF-1A subfamily. As to quaternary structure, monomer.

Its subcellular location is the cytoplasm. It carries out the reaction GTP + H2O = GDP + phosphate + H(+). GTP hydrolase that promotes the GTP-dependent binding of aminoacyl-tRNA to the A-site of ribosomes during protein biosynthesis. In Lactobacillus gasseri (strain ATCC 33323 / DSM 20243 / BCRC 14619 / CIP 102991 / JCM 1131 / KCTC 3163 / NCIMB 11718 / NCTC 13722 / AM63), this protein is Elongation factor Tu.